Consider the following 426-residue polypeptide: Cytochrome c biogenesis protein CcsB (426 aa).

Helical transmembrane passes span 14–34 (LKIA…GTLI), 72–92 (SFWF…CSFR), and 162–182 (LGPI…TYGS).

This sequence belongs to the Ccs1/CcsB family. May interact with CcsA.

It localises to the cellular thylakoid membrane. Its function is as follows. Required during biogenesis of c-type cytochromes (cytochrome c6 and cytochrome f) at the step of heme attachment. The chain is Cytochrome c biogenesis protein CcsB from Prochlorococcus marinus (strain NATL2A).